A 256-amino-acid polypeptide reads, in one-letter code: Methylesterase 9 (256 aa).

Ser78 serves as the catalytic Acyl-ester intermediate. Active-site charge relay system residues include Asp206 and His234.

This sequence belongs to the AB hydrolase superfamily. Methylesterase family.

It carries out the reaction methyl (indol-3-yl)acetate + H2O = (indol-3-yl)acetate + methanol + H(+). It catalyses the reaction methyl (-)-jasmonate + H2O = jasmonate + methanol + H(+). The enzyme catalyses methyl salicylate + H2O = salicylate + methanol + H(+). It functions in the pathway plant hormone biosynthesis. It participates in lipid metabolism; oxylipin biosynthesis. With respect to regulation, esterase activity is down-regulated by salicylic acid (SA). Methylesterase shown to have carboxylesterase activity, methyl indole-3-acetic acid (MeIAA) esterase activity, methyl salicylate (MeSA) esterase activity and methyl jasmonate (MeJA) esterase activity in vitro. Required to convert methyl salicylate (MeSA) to salicylic acid (SA) as part of the signal transduction pathways that activate systemic acquired resistance in systemic tissue. MeSA is believed to be an inactive form that needs to be demethylated to exert a biological effect. The chain is Methylesterase 9 from Arabidopsis thaliana (Mouse-ear cress).